A 102-amino-acid polypeptide reads, in one-letter code: Pole-localizer protein TmaR (102 aa).

The stretch at 7–34 (IINQARRKNKLKRELQDNQKKIRDNQKR) forms a coiled coil.

Belongs to the pole-localizer TmaR family.

The protein localises to the cytoplasm. Functionally, pole-localizer protein involved in the regulation of several cellular processes. This Aliivibrio fischeri (strain ATCC 700601 / ES114) (Vibrio fischeri) protein is Pole-localizer protein TmaR.